A 394-amino-acid polypeptide reads, in one-letter code: S-adenosylmethionine synthase (394 aa).

H18 is an ATP binding site. Residue D20 participates in Mg(2+) binding. E46 is a K(+) binding site. Residues E59 and Q104 each coordinate L-methionine. Positions 104–114 (QSPDIAQGVDA) are flexible loop. ATP-binding positions include 174 to 176 (DCK), 240 to 241 (KF), D249, 255 to 256 (RK), A272, and K276. Residue D249 participates in L-methionine binding. Residue K280 participates in L-methionine binding.

It belongs to the AdoMet synthase family. As to quaternary structure, homotetramer; dimer of dimers. Requires Mg(2+) as cofactor. K(+) serves as cofactor.

The protein resides in the cytoplasm. The catalysed reaction is L-methionine + ATP + H2O = S-adenosyl-L-methionine + phosphate + diphosphate. The protein operates within amino-acid biosynthesis; S-adenosyl-L-methionine biosynthesis; S-adenosyl-L-methionine from L-methionine: step 1/1. Its function is as follows. Catalyzes the formation of S-adenosylmethionine (AdoMet) from methionine and ATP. The overall synthetic reaction is composed of two sequential steps, AdoMet formation and the subsequent tripolyphosphate hydrolysis which occurs prior to release of AdoMet from the enzyme. This Akkermansia muciniphila (strain ATCC BAA-835 / DSM 22959 / JCM 33894 / BCRC 81048 / CCUG 64013 / CIP 107961 / Muc) protein is S-adenosylmethionine synthase.